Reading from the N-terminus, the 148-residue chain is Snaclec crotocetin (148 aa).

An N-terminal signal peptide occupies residues 1–23 (MGRLVFVSFGLLVVFLSLTGTGA). Cystine bridges form between Cys27–Cys38, Cys55–Cys144, and Cys121–Cys136. Positions 34–145 (YEGHCYKVFK…CSKTHKVVCK (112 aa)) constitute a C-type lectin domain.

This sequence belongs to the snaclec family. As to quaternary structure, heterodimer; disulfide-linked. As to expression, expressed by the venom gland.

The protein resides in the secreted. Interferes with one step of hemostasis (modulation of platelet aggregation, or coagulation cascade, for example). In Crotalus durissus terrificus (South American rattlesnake), this protein is Snaclec crotocetin.